A 183-amino-acid chain; its full sequence is MDIDTYKEFGASVELLSFLPSDFFPSIRDLLDTAFALHREALESPEHCSPHHTALRQAIVCWGELMNLATWVGSNLEDPASRELVVSYVNVNMGLKIRQLLWFHISCLTFGRETVLEYLVSVGVWIRTPQAYRPPNAPILSTLPETTVVRRRGRSPRRRTPSPRRRRSKSPRRRRSQSRESQC.

The tract at residues Leu143–Cys183 is disordered. The span at Val149–Ser176 shows a compositional bias: basic residues. A phosphoserine; by host mark is found at Ser155, Ser162, and Ser170. Residues Ser155–Thr160 form a 1; half-length repeat. The tract at residues Ser155 to Ser176 is 3 X 7 AA repeats of S-P-R-R-R-[PR]-S. The short motif at Arg158–Arg175 is the Bipartite nuclear localization signal element. A run of 2 repeats spans residues Ser162–Ser168 and Ser170–Ser176. Positions Gln177–Cys183 are RNA binding.

The protein belongs to the orthohepadnavirus core antigen family. Homodimerizes, then multimerizes. Interacts with cytosol exposed regions of viral L glycoprotein present in the reticulum-to-Golgi compartment. Interacts with human FLNB. Phosphorylated form interacts with host importin alpha; this interaction depends on the exposure of the NLS, which itself depends upon genome maturation and/or phosphorylation of the capsid protein. Interacts with host NUP153. In terms of processing, phosphorylated by host SRPK1, SRPK2, and maybe protein kinase C or GAPDH. Phosphorylation is critical for pregenomic RNA packaging. Protein kinase C phosphorylation is stimulated by HBx protein and may play a role in transport of the viral genome to the nucleus at the late step during the viral replication cycle.

The protein resides in the virion. Its subcellular location is the host cytoplasm. In terms of biological role, self assembles to form an icosahedral capsid. Most capsids appear to be large particles with an icosahedral symmetry of T=4 and consist of 240 copies of capsid protein, though a fraction forms smaller T=3 particles consisting of 180 capsid proteins. Entering capsids are transported along microtubules to the nucleus. Phosphorylation of the capsid is thought to induce exposure of nuclear localization signal in the C-terminal portion of the capsid protein that allows binding to the nuclear pore complex via the importin (karyopherin-) alpha and beta. Capsids are imported in intact form through the nuclear pore into the nuclear basket, where it probably binds NUP153. Only capsids that contain the mature viral genome can release the viral DNA and capsid protein into the nucleoplasm. Immature capsids get stuck in the basket. Capsids encapsulate the pre-genomic RNA and the P protein. Pre-genomic RNA is reverse-transcribed into DNA while the capsid is still in the cytoplasm. The capsid can then either be directed to the nucleus, providing more genomes for transcription, or bud through the endoplasmic reticulum to provide new virions. The chain is Capsid protein from Homo sapiens (Human).